Here is a 233-residue protein sequence, read N- to C-terminus: 7-cyano-7-deazaguanine synthase 2 (233 aa).

Position 8-18 (8-18 (LSGGLDSTTCM)) interacts with ATP. Positions 186, 194, 197, and 200 each coordinate Zn(2+).

This sequence belongs to the QueC family. As to quaternary structure, homodimer. Zn(2+) is required as a cofactor.

The catalysed reaction is 7-carboxy-7-deazaguanine + NH4(+) + ATP = 7-cyano-7-deazaguanine + ADP + phosphate + H2O + H(+). It functions in the pathway purine metabolism; 7-cyano-7-deazaguanine biosynthesis. Functionally, catalyzes the ATP-dependent conversion of 7-carboxy-7-deazaguanine (CDG) to 7-cyano-7-deazaguanine (preQ(0)). The polypeptide is 7-cyano-7-deazaguanine synthase 2 (Desulfitobacterium hafniense (strain Y51)).